Reading from the N-terminus, the 921-residue chain is Isoleucine--tRNA ligase (921 aa).

Positions 57 to 67 (PYANGDIHMGH) match the 'HIGH' region motif. Glutamate 552 serves as a coordination point for L-isoleucyl-5'-AMP. The 'KMSKS' region signature appears at 593–597 (KMSKS). An ATP-binding site is contributed by lysine 596. 4 residues coordinate Zn(2+): cysteine 888, cysteine 891, cysteine 908, and cysteine 911.

This sequence belongs to the class-I aminoacyl-tRNA synthetase family. IleS type 1 subfamily. Monomer. Zn(2+) serves as cofactor.

The protein localises to the cytoplasm. It carries out the reaction tRNA(Ile) + L-isoleucine + ATP = L-isoleucyl-tRNA(Ile) + AMP + diphosphate. Catalyzes the attachment of isoleucine to tRNA(Ile). As IleRS can inadvertently accommodate and process structurally similar amino acids such as valine, to avoid such errors it has two additional distinct tRNA(Ile)-dependent editing activities. One activity is designated as 'pretransfer' editing and involves the hydrolysis of activated Val-AMP. The other activity is designated 'posttransfer' editing and involves deacylation of mischarged Val-tRNA(Ile). This is Isoleucine--tRNA ligase from Bacillus mycoides (strain KBAB4) (Bacillus weihenstephanensis).